Reading from the N-terminus, the 663-residue chain is Polyunsaturated fatty acid lipoxygenase ALOX15 (663 aa).

A PLAT domain is found at 2–115; sequence GVYRIRVSTG…ILSLPEGTGC (114 aa). Positions 116–663 constitute a Lipoxygenase domain; sequence TVVEDSQGLF…PSMVENSVAI (548 aa). Residue serine 149 is modified to Phosphoserine. Fe cation-binding residues include histidine 361, histidine 366, histidine 541, histidine 545, and isoleucine 663.

It belongs to the lipoxygenase family. In terms of assembly, interacts with PEBP1; in response to IL13/interleukin-13, prevents the interaction of PEBP1 with RAF1 to activate the ERK signaling cascade. It depends on Fe cation as a cofactor. In terms of tissue distribution, detected in leukocytes, lung and aorta.

It is found in the cytoplasm. It localises to the cytosol. Its subcellular location is the cell membrane. The protein localises to the lipid droplet. The enzyme catalyses (5Z,8Z,11Z,14Z)-eicosatetraenoate + O2 = (12S)-hydroperoxy-(5Z,8Z,10E,14Z)-eicosatetraenoate. It catalyses the reaction (5Z,8Z,11Z,14Z)-eicosatetraenoate + O2 = (15S)-hydroperoxy-(5Z,8Z,11Z,13E)-eicosatetraenoate. It carries out the reaction (9Z,12Z)-octadecadienoate + O2 = (13S)-hydroperoxy-(9Z,11E)-octadecadienoate. The catalysed reaction is (12S)-hydroperoxy-(5Z,8Z,10E,14Z)-eicosatetraenoate = (8S)-hydroxy-(11S,12S)-epoxy-(5Z,9E,14Z)-eicosatrienoate. The enzyme catalyses (5Z,8Z,11Z,14Z)-eicosatetraenoate + 2 O2 = (14R,15S)-dihydroperoxy-(5Z,8Z,10E,12E)-eicosatetraenoate. It catalyses the reaction (5Z,8Z,11Z,14Z)-eicosatetraenoate + 2 O2 = (8S,15S)-dihydroperoxy-(5Z,9E,11Z,13E)-eicosatetraenoate. It carries out the reaction (14S,15R)-epoxy-(5Z,8Z,11Z)-eicosatrienoate + O2 = (8S)-hydroperoxy-(14S,15R)-epoxy-(5Z,9E,11Z)-eicosatrienoate. The catalysed reaction is (14S,15R)-epoxy-(5Z,8Z,11Z)-eicosatrienoate + O2 = (12S)-hydroperoxy-(14S,15R)-epoxy-(5Z,8Z,10E)-eicosatrienoate. The enzyme catalyses (14R,15S)-epoxy-(5Z,8Z,11Z)-eicosatrienoate + O2 = (5S)-hydroperoxy-(14R,15S)-epoxy-(6E,8Z,11Z)-eicosatrienoate. It catalyses the reaction (14R,15S)-epoxy-(5Z,8Z,11Z)-eicosatrienoate + O2 = (12S)-hydroperoxy-(14R,15S)-epoxy-(5Z,8Z,10E)-eicosatrienoate. It carries out the reaction (15R)-hydroperoxy-(5Z,8Z,11Z,13E)-eicosatetraenoate = 15-oxo-(5Z,8Z,11Z,13E)-eicosatetraenoate + H2O. The catalysed reaction is (15S)-hydroperoxy-(5Z,8Z,11Z,13E)-eicosatetraenoate = (14S,15S)-epoxy-(5Z,8Z,10E,12E)-eicosatetraenoate + H2O. The enzyme catalyses (4Z,7Z,10Z,13Z,16Z)-docosapentaenoate + O2 = 14-hydroperoxy-(4Z,7Z,10Z,12E,16Z)-docosapentaenoate. It catalyses the reaction (7Z,10Z,13Z,16Z,19Z)-docosapentaenoate + O2 = 14-hydroperoxy-(7Z,10Z,12E,16Z,19Z)-docosapentaenoate. It carries out the reaction (4Z,7Z,10Z,13Z,16Z,19Z)-docosahexaenoate + O2 = (14S)-hydroperoxy-(4Z,7Z,10Z,12E,16Z,19Z)-docosahexaenoate. The catalysed reaction is (4Z,7Z,10Z,13Z,16Z,19Z)-docosahexaenoate + O2 = (17S)-hydroperoxy-(4Z,7Z,10Z,13Z,15E,19Z)-docosahexaenoate. The enzyme catalyses (7S)-hydroperoxy-(4Z,8E,10Z,13Z,16Z,19Z)-docosahexaenoate + O2 = (7S,14S)-dihydroperoxy-(4Z,8E,10Z,12E,16Z,19Z)-docosahexaenoate. It catalyses the reaction (7S)-hydroperoxy-(4Z,8E,10Z,13Z,16Z,19Z)-docosahexaenoate + O2 = (7S,17S)-dihydroperoxy-(4Z,8E,10Z,13Z,15E,19Z)-docosahexaenoate. It carries out the reaction (4Z,7Z,10Z,13Z,16Z,19Z)-docosahexaenoate + O2 = (11S)-hydroperoxy-(4Z,7Z,9E,13Z,16Z,19Z)-docosahexaenoate. The catalysed reaction is N-(5Z,8Z,11Z,14Z)-eicosatetraenoyl-taurine + O2 = N-(12S)-hydroperoxy-(5Z,8Z,10E,14Z)-eicosatetraenoyl-taurine. The enzyme catalyses N-(5Z,8Z,11Z,14Z)-eicosatetraenoyl-gamma-aminobutanoate + O2 = N-(12S)-hydroperoxy-(5Z,8Z,10E,14Z)-eicosatetraenoyl-gamma-aminobutanoate. It catalyses the reaction N-(5Z,8Z,11Z,14Z)-eicosatetraenoyl-glycine + O2 = N-(12S)-hydroperoxy-(5Z,8Z,10E,14Z)-eicosatetraenoyl-glycine. It carries out the reaction N-(5Z,8Z,11Z,14Z)-eicosatetraenoyl-L-alanine + O2 = N-(12S)-hydroperoxy-(5Z,8Z,10E,14Z)-eicosatetraenoyl-alanine. The catalysed reaction is N-(5Z,8Z,11Z,14Z)-eicosatetraenoyl-taurine + O2 = N-(15S)-hydroperoxy-(5Z,8Z,11Z,13E)-eicosatetraenoyl-taurine. The enzyme catalyses N-(5Z,8Z,11Z,14Z)-eicosatetraenoyl-gamma-aminobutanoate + O2 = N-(15S)-hydroperoxy-(5Z,8Z,11Z,13E)-eicosatetraenoyl-gamma-aminobutanoate. It catalyses the reaction N-(5Z,8Z,11Z,14Z)-eicosatetraenoyl-glycine + O2 = N-(15S)-hydroperoxy-(5Z,8Z,11Z,13E)-eicosatetraenoyl-glycine. It carries out the reaction N-(5Z,8Z,11Z,14Z)-eicosatetraenoyl-L-alanine + O2 = N-(15S)-hydroperoxy-(5Z,8Z,11Z,13E)-eicosatetraenoyl-alanine. It functions in the pathway lipid metabolism; hydroperoxy eicosatetraenoic acid biosynthesis. Non-heme iron-containing dioxygenase that catalyzes the stereo-specific peroxidation of free and esterified polyunsaturated fatty acids generating a spectrum of bioactive lipid mediators. It inserts peroxyl groups at C12 or C15 of arachidonate ((5Z,8Z,11Z,14Z)-eicosatetraenoate) producing both 12-hydroperoxyeicosatetraenoate/12-HPETE and 15-hydroperoxyeicosatetraenoate/15-HPETE. It may then act on 12-HPETE to produce hepoxilins, which may show pro-inflammatory properties. Can also peroxidize linoleate ((9Z,12Z)-octadecadienoate) to 13-hydroperoxyoctadecadienoate. May participate in the sequential oxidations of DHA ((4Z,7Z,10Z,13Z,16Z,19Z)-docosahexaenoate) to generate specialized pro-resolving mediators (SPMs)like resolvin D5 ((7S,17S)-diHPDHA) and (7S,14S)-diHPDHA, that actively down-regulate the immune response and have anti-aggregation properties with platelets. Can convert epoxy fatty acids to hydroperoxy-epoxides derivatives followed by an intramolecular nucleophilic substitution leading to the formation of monocyclic endoperoxides. Plays an important role during the maintenance of self-tolerance by peroxidizing membrane-bound phosphatidylethanolamine which can then signal the sorting process for clearance of apoptotic cells during inflammation and prevent an autoimmune response. In addition to its role in the immune and inflammatory responses, this enzyme may play a role in epithelial wound healing in the cornea through production of lipoxin A4 (LXA(4)) and docosahexaenoic acid-derived neuroprotectin D1 (NPD1; 10R,17S-HDHA), both lipid autacoids exhibit anti-inflammatory and neuroprotective properties. Furthermore, it may regulate actin polymerization which is crucial for several biological processes such as the phagocytosis of apoptotic cells. It is also implicated in the generation of endogenous ligands for peroxisome proliferator activated receptor (PPAR-gamma), hence modulating macrophage development and function. It may also exert a negative effect on skeletal development by regulating bone mass through this pathway. As well as participates in ER stress and downstream inflammation in adipocytes, pancreatic islets, and liver. Finally, it is also involved in the cellular response to IL13/interleukin-13. The protein is Polyunsaturated fatty acid lipoxygenase ALOX15 of Rattus norvegicus (Rat).